Consider the following 401-residue polypeptide: Probable E3 ubiquitin-protein ligase RHC2A (401 aa).

Residues 41–93 form a disordered region; that stretch reads TPSDSFTTTTTTQHRSPTRFPPPSSSSSTPSASMHADNSPTPTIVTRTRSNRS. Residues 76–93 show a composition bias toward polar residues; sequence ADNSPTPTIVTRTRSNRS. The RING-type; atypical zinc-finger motif lies at 201-242; sequence CAVCKENFVLKSSAREMPCNHIYHPDCILPWLAIRNSCPVCR.

The enzyme catalyses S-ubiquitinyl-[E2 ubiquitin-conjugating enzyme]-L-cysteine + [acceptor protein]-L-lysine = [E2 ubiquitin-conjugating enzyme]-L-cysteine + N(6)-ubiquitinyl-[acceptor protein]-L-lysine.. It participates in protein modification; protein ubiquitination. Probable E3 ubiquitin-protein ligase that may possess E3 ubiquitin ligase activity in vitro. In Arabidopsis thaliana (Mouse-ear cress), this protein is Probable E3 ubiquitin-protein ligase RHC2A.